The chain runs to 1073 residues: Guanylyl cyclase C (1073 aa).

Residues 1-23 (MKTLLLDLALWSLLFQPGWLSFS) form the signal peptide. The Extracellular segment spans residues 24 to 430 (SQVSQNCHNG…PNDITGRGPQ (407 aa)). 8 N-linked (GlcNAc...) asparagine glycosylation sites follow: Asn32, Asn75, Asn79, Asn195, Asn284, Asn307, Asn345, and Asn402. Residues 431–454 (ILMIAVFTLTGAVVLLLLVALLML) form a helical membrane-spanning segment. Residues 455-1073 (RKYRKDYELR…NTTDKESTYF (619 aa)) are Cytoplasmic-facing. A Protein kinase domain is found at 489–749 (LKIDDDKRRD…KIETTLAKIF (261 aa)). Residues 824 to 954 (TIYFSDIVGF…DTVNTASRME (131 aa)) form the Guanylate cyclase domain.

The protein belongs to the adenylyl cyclase class-4/guanylyl cyclase family. As to quaternary structure, homotrimer. Interacts via its C-terminal region with NHERF4. Interacts with the lectin chaperone VIP36. Post-translationally, glycosylation at Asn-75 and/or Asn-79 is required for interaction with VIP36 while glycosylation at Asn-345 and Asn-402 modulates ligand-mediated GUCY2C activation.

Its subcellular location is the cell membrane. It localises to the endoplasmic reticulum membrane. The catalysed reaction is GTP = 3',5'-cyclic GMP + diphosphate. In terms of biological role, guanylyl cyclase that catalyzes synthesis of cyclic GMP (cGMP) from GTP. Receptor for the E.coli heat-stable enterotoxin; E.coli enterotoxin markedly stimulates the accumulation of cGMP in mammalian cells expressing GUCY2C. Also activated by the endogenous peptides guanylin and uroguanylin. The polypeptide is Guanylyl cyclase C (Homo sapiens (Human)).